Here is a 431-residue protein sequence, read N- to C-terminus: O-methyltransferase xanE (431 aa).

Asp-283 is a binding site for S-adenosyl-L-methionine. His-330 functions as the Proton acceptor in the catalytic mechanism.

This sequence belongs to the class I-like SAM-binding methyltransferase superfamily. Cation-independent O-methyltransferase family.

Its pathway is secondary metabolite biosynthesis. Its function is as follows. O-methyltransferase; part of the gene cluster that mediates the biosynthesis of the isocyanide xanthocillin and its derivatives. The first step of the pathway consists in the conversion of tyrosine into a vinyl-isonitrile intermediate by the isocyanide synthase xanB. Subsequent oxidative dimerization of this intermediate to form xanthocillin may involve the cytochrome P450 monooxygenase xanG, whose expression is coregulated with that of XanB. Xanthocillin can be further modified by the isonitrile hydratase-like protein xanA which introduces N-formyl groups and the methyltransferase xanE which introduces methyl groups, leading to the production of several derivatives including fumiformamide. Finally, fumiformamide can be subject to both oxidative and reductive cyclization to yield melanocins E and F, respectively. This Aspergillus fumigatus (strain ATCC MYA-4609 / CBS 101355 / FGSC A1100 / Af293) (Neosartorya fumigata) protein is O-methyltransferase xanE.